The sequence spans 545 residues: CTP synthase (545 aa).

The interval 1–266 (MTTNYIFVTG…DDLVCARFGI (266 aa)) is amidoligase domain. S14 is a CTP binding site. A UTP-binding site is contributed by S14. ATP-binding positions include 15 to 20 (SLGKGI) and D72. The Mg(2+) site is built by D72 and E140. CTP-binding positions include 147-149 (DIE), 187-192 (KTKPTQ), and K223. UTP-binding positions include 187–192 (KTKPTQ) and K223. 239 to 241 (KDV) contributes to the ATP binding site. In terms of domain architecture, Glutamine amidotransferase type-1 spans 291–542 (TIGMVGKYIE…IKAAGENARG (252 aa)). Residue G352 participates in L-glutamine binding. The active-site Nucleophile; for glutamine hydrolysis is the C379. Residues 380–383 (LGMQ), E403, and R470 each bind L-glutamine. Catalysis depends on residues H515 and E517.

The protein belongs to the CTP synthase family. As to quaternary structure, homotetramer.

It carries out the reaction UTP + L-glutamine + ATP + H2O = CTP + L-glutamate + ADP + phosphate + 2 H(+). The catalysed reaction is L-glutamine + H2O = L-glutamate + NH4(+). The enzyme catalyses UTP + NH4(+) + ATP = CTP + ADP + phosphate + 2 H(+). It functions in the pathway pyrimidine metabolism; CTP biosynthesis via de novo pathway; CTP from UDP: step 2/2. With respect to regulation, allosterically activated by GTP, when glutamine is the substrate; GTP has no effect on the reaction when ammonia is the substrate. The allosteric effector GTP functions by stabilizing the protein conformation that binds the tetrahedral intermediate(s) formed during glutamine hydrolysis. Inhibited by the product CTP, via allosteric rather than competitive inhibition. Its function is as follows. Catalyzes the ATP-dependent amination of UTP to CTP with either L-glutamine or ammonia as the source of nitrogen. Regulates intracellular CTP levels through interactions with the four ribonucleotide triphosphates. The sequence is that of CTP synthase from Vibrio vulnificus (strain CMCP6).